A 477-amino-acid polypeptide reads, in one-letter code: P3 protein (477 aa).

Positions 1–21 are disordered; the sequence is MVFRSGEGHSLQWPGPEGGTG. Helical transmembrane passes span 225-245, 253-273, 281-301, 320-340, 361-381, 383-403, 417-437, and 450-470; these read PMLL…FLMA, ALAL…SYLF, VTLA…FLPL, VSKI…GVVI, VLLL…LAGV, LPIV…GYGL, VSIE…QLSL, and FLVA…HFIY.

This sequence belongs to the bile acid:sodium symporter (BASS) (TC 2.A.28) family.

It is found in the membrane. Functionally, the ubiquitous expression and the conservation of the sequence in distant animal species suggest that the gene codes for a protein with housekeeping functions. This chain is P3 protein (SLC10A3), found in Bos taurus (Bovine).